Consider the following 220-residue polypeptide: CASP-like protein 1E1 (220 aa).

The Cytoplasmic portion of the chain corresponds to 1–57 (METPTPRVKPGFNGVGVGMGSSVNGSSRRAGYYMGPAGAVAVAGGGRAAAAAPVDGC). Residues 58–78 (SVALRVFVLAATLVSAVVMGV) traverse the membrane as a helical segment. Over 79–108 (DRQTSTIRITVTDALPPLEVPLTANWSYSS) the chain is Extracellular. A glycan (N-linked (GlcNAc...) asparagine) is linked at asparagine 103. Residues 109–129 (AFVYFVVANAMVCLFSAAALA) form a helical membrane-spanning segment. The Cytoplasmic segment spans residues 130–144 (ACRSRAAMVPVMVGD). A helical membrane pass occupies residues 145–165 (LLALALLYSAVGAAAEFGILG). Residues 166–187 (ERGNSHVRWPKVCNVYGRFCER) are Extracellular-facing. Residues 188–208 (AMAAVIVSLIAAFANLVLLML) form a helical membrane-spanning segment. At 209–220 (NILTIHKSSSYY) the chain is on the cytoplasmic side.

The protein belongs to the Casparian strip membrane proteins (CASP) family. Homodimer and heterodimers.

The protein resides in the cell membrane. The sequence is that of CASP-like protein 1E1 from Zea mays (Maize).